We begin with the raw amino-acid sequence, 504 residues long: Acid phosphatase A (504 aa).

A signal peptide spans 1–22 (MYTLLDILKGLPLLAVAAIASA). 7 N-linked (GlcNAc...) asparagine glycosylation sites follow: Asn-84, Asn-112, Asn-168, Asn-260, Asn-415, Asn-450, and Asn-474.

This sequence belongs to the metallophosphoesterase superfamily. Purple acid phosphatase family. In terms of assembly, monomer.

The protein resides in the secreted. The catalysed reaction is a phosphate monoester + H2O = an alcohol + phosphate. Its function is as follows. Acid phosphatase involved in the regulation of fungal phenotypic traits and virulence in C.parasitica. The sequence is that of Acid phosphatase A from Cryphonectria parasitica (strain ATCC 38755 / EP155).